Here is a 370-residue protein sequence, read N- to C-terminus: Dual-specificity RNA methyltransferase RlmN (370 aa).

The active-site Proton acceptor is E93. The 239-residue stretch at 99–337 (EEGRGTLCVS…VTTVRKTRGD (239 aa)) folds into the Radical SAM core domain. C106 and C343 are joined by a disulfide. Positions 113, 117, and 120 each coordinate [4Fe-4S] cluster. S-adenosyl-L-methionine contacts are provided by residues 167–168 (GE), S199, 221–223 (SLH), and N300. Residue C343 is the S-methylcysteine intermediate of the active site.

The protein belongs to the radical SAM superfamily. RlmN family. [4Fe-4S] cluster is required as a cofactor.

The protein localises to the cytoplasm. The enzyme catalyses adenosine(2503) in 23S rRNA + 2 reduced [2Fe-2S]-[ferredoxin] + 2 S-adenosyl-L-methionine = 2-methyladenosine(2503) in 23S rRNA + 5'-deoxyadenosine + L-methionine + 2 oxidized [2Fe-2S]-[ferredoxin] + S-adenosyl-L-homocysteine. It catalyses the reaction adenosine(37) in tRNA + 2 reduced [2Fe-2S]-[ferredoxin] + 2 S-adenosyl-L-methionine = 2-methyladenosine(37) in tRNA + 5'-deoxyadenosine + L-methionine + 2 oxidized [2Fe-2S]-[ferredoxin] + S-adenosyl-L-homocysteine. Functionally, specifically methylates position 2 of adenine 2503 in 23S rRNA and position 2 of adenine 37 in tRNAs. m2A2503 modification seems to play a crucial role in the proofreading step occurring at the peptidyl transferase center and thus would serve to optimize ribosomal fidelity. This is Dual-specificity RNA methyltransferase RlmN from Francisella philomiragia subsp. philomiragia (strain ATCC 25017 / CCUG 19701 / FSC 153 / O#319-036).